The sequence spans 63 residues: Large ribosomal subunit protein uL29 (63 aa).

This sequence belongs to the universal ribosomal protein uL29 family.

This is Large ribosomal subunit protein uL29 from Shewanella pealeana (strain ATCC 700345 / ANG-SQ1).